Consider the following 103-residue polypeptide: Large ribosomal subunit protein eL14 (103 aa).

This sequence belongs to the eukaryotic ribosomal protein eL14 family.

The polypeptide is Large ribosomal subunit protein eL14 (Pyrobaculum aerophilum (strain ATCC 51768 / DSM 7523 / JCM 9630 / CIP 104966 / NBRC 100827 / IM2)).